The chain runs to 548 residues: Chaperonin GroEL (548 aa).

ATP-binding positions include 29–32, K50, 86–90, G414, 478–480, and D494; these read TMGP, DGTTT, and NAA.

It belongs to the chaperonin (HSP60) family. Forms a cylinder of 14 subunits composed of two heptameric rings stacked back-to-back. Interacts with the co-chaperonin GroES.

Its subcellular location is the cytoplasm. It carries out the reaction ATP + H2O + a folded polypeptide = ADP + phosphate + an unfolded polypeptide.. Functionally, together with its co-chaperonin GroES, plays an essential role in assisting protein folding. The GroEL-GroES system forms a nano-cage that allows encapsulation of the non-native substrate proteins and provides a physical environment optimized to promote and accelerate protein folding. The protein is Chaperonin GroEL of Legionella pneumophila (strain Paris).